A 204-amino-acid chain; its full sequence is Leucyl/phenylalanyl-tRNA--protein transferase (204 aa).

This sequence belongs to the L/F-transferase family.

The protein resides in the cytoplasm. The enzyme catalyses N-terminal L-lysyl-[protein] + L-leucyl-tRNA(Leu) = N-terminal L-leucyl-L-lysyl-[protein] + tRNA(Leu) + H(+). It carries out the reaction N-terminal L-arginyl-[protein] + L-leucyl-tRNA(Leu) = N-terminal L-leucyl-L-arginyl-[protein] + tRNA(Leu) + H(+). It catalyses the reaction L-phenylalanyl-tRNA(Phe) + an N-terminal L-alpha-aminoacyl-[protein] = an N-terminal L-phenylalanyl-L-alpha-aminoacyl-[protein] + tRNA(Phe). Its function is as follows. Functions in the N-end rule pathway of protein degradation where it conjugates Leu, Phe and, less efficiently, Met from aminoacyl-tRNAs to the N-termini of proteins containing an N-terminal arginine or lysine. The polypeptide is Leucyl/phenylalanyl-tRNA--protein transferase (Sinorhizobium fredii (strain NBRC 101917 / NGR234)).